We begin with the raw amino-acid sequence, 351 residues long: Protein disulfide isomerase CRELD2 (351 aa).

An N-terminal signal peptide occupies residues 1–21 (MRPPAPAVLGLLLLLLPTGEA). The short motif at 28–31 (CKRC) is the CXXC element. 4 cysteine pairs are disulfide-bonded: Cys28–Cys31, Cys137–Cys151, Cys145–Cys163, and Cys165–Cys174. The region spanning 133–175 (DCLACQGGSERPCSGNGHCVGDGTREGDGSCQCHLGYQGPLCS) is the EGF-like 1 domain. An FU 1 repeat occupies 190 to 237 (HSICSACDEACKTCVGPTNRDCGQCEVGWVRQDDACVDVDECAAEPPP). Asn248 is a glycosylation site (N-linked (GlcNAc...) asparagine). One copy of the FU 2 repeat lies at 250–297 (SFVCEECDPTCMGCTGKGPTQCRECIAGYSKESGQCEDIDECSLAEKP). The CXXC motif lies at 260 to 263 (CMGC). 4 disulfide bridges follow: Cys260-Cys263, Cys291-Cys305, Cys298-Cys314, and Cys316-Cys327. An EGF-like 2; calcium-binding domain is found at 287–328 (DIDECSLAEKPCLRDNENCYNTPGSFVCVCPDGFEEAEDTCV). The segment at 329 to 351 (QTRPAGAEATEASPTQPPSREDL) is disordered.

This sequence belongs to the CRELD family. In terms of assembly, interacts with CHRNA4. Component of a complex containing at least CRELD2, MANF, MATN3 and PDIA4.

The protein resides in the endoplasmic reticulum. The enzyme catalyses Catalyzes the rearrangement of -S-S- bonds in proteins.. Functionally, protein disulfide isomerase. Might play a role in the unfolded protein response. May regulate transport of alpha4-beta2 neuronal acetylcholine receptor. The sequence is that of Protein disulfide isomerase CRELD2 (CRELD2) from Bos taurus (Bovine).